A 544-amino-acid polypeptide reads, in one-letter code: ATP synthase subunit alpha (544 aa).

173 to 180 (GDRQTGKT) serves as a coordination point for ATP. The tract at residues 513–544 (GSDGQIIGGGEPESDGEDVDVEQEQIVRQKRG) is disordered. Over residues 524 to 535 (PESDGEDVDVEQ) the composition is skewed to acidic residues.

It belongs to the ATPase alpha/beta chains family. As to quaternary structure, F-type ATPases have 2 components, CF(1) - the catalytic core - and CF(0) - the membrane proton channel. CF(1) has five subunits: alpha(3), beta(3), gamma(1), delta(1), epsilon(1). CF(0) has three main subunits: a(1), b(2) and c(9-12). The alpha and beta chains form an alternating ring which encloses part of the gamma chain. CF(1) is attached to CF(0) by a central stalk formed by the gamma and epsilon chains, while a peripheral stalk is formed by the delta and b chains.

The protein resides in the cell membrane. The catalysed reaction is ATP + H2O + 4 H(+)(in) = ADP + phosphate + 5 H(+)(out). Its function is as follows. Produces ATP from ADP in the presence of a proton gradient across the membrane. The alpha chain is a regulatory subunit. The chain is ATP synthase subunit alpha from Beutenbergia cavernae (strain ATCC BAA-8 / DSM 12333 / CCUG 43141 / JCM 11478 / NBRC 16432 / NCIMB 13614 / HKI 0122).